We begin with the raw amino-acid sequence, 308 residues long: Ornithine carbamoyltransferase (308 aa).

Carbamoyl phosphate-binding positions include R103 and 130 to 133 (HPAQ). L-ornithine is bound by residues N162, D221, and 225–226 (SM). Residues 261–262 (CL) and R289 contribute to the carbamoyl phosphate site.

This sequence belongs to the aspartate/ornithine carbamoyltransferase superfamily. OTCase family.

It is found in the cytoplasm. It catalyses the reaction carbamoyl phosphate + L-ornithine = L-citrulline + phosphate + H(+). It functions in the pathway amino-acid biosynthesis; L-arginine biosynthesis; L-arginine from L-ornithine and carbamoyl phosphate: step 1/3. Functionally, reversibly catalyzes the transfer of the carbamoyl group from carbamoyl phosphate (CP) to the N(epsilon) atom of ornithine (ORN) to produce L-citrulline. The sequence is that of Ornithine carbamoyltransferase from Deinococcus radiodurans (strain ATCC 13939 / DSM 20539 / JCM 16871 / CCUG 27074 / LMG 4051 / NBRC 15346 / NCIMB 9279 / VKM B-1422 / R1).